The chain runs to 86 residues: Cyclin-dependent kinase inhibitor 6 (86 aa).

Residues Met1–Ala15 show a composition bias toward low complexity. The segment at Met1 to Gly23 is disordered.

This sequence belongs to the CDI family. ICK/KRP subfamily.

The polypeptide is Cyclin-dependent kinase inhibitor 6 (KRP6) (Oryza sativa subsp. japonica (Rice)).